Here is a 493-residue protein sequence, read N- to C-terminus: Cytochrome P450 2E1 (493 aa).

Residue 298-303 (FAGTET) participates in substrate binding. C437 is a binding site for heme.

It belongs to the cytochrome P450 family. As to quaternary structure, interacts with chaperones HSP70 and HSP90; this interaction is required for initial targeting to mitochondria. Heme serves as cofactor.

The protein localises to the endoplasmic reticulum membrane. It is found in the microsome membrane. The protein resides in the mitochondrion inner membrane. It carries out the reaction an organic molecule + reduced [NADPH--hemoprotein reductase] + O2 = an alcohol + oxidized [NADPH--hemoprotein reductase] + H2O + H(+). The enzyme catalyses (5Z,8Z,11Z)-eicosatrienoate + reduced [NADPH--hemoprotein reductase] + O2 = 19-hydroxy-(5Z,8Z,11Z)-eicosatrienoate + oxidized [NADPH--hemoprotein reductase] + H2O + H(+). It catalyses the reaction (5Z,8Z,11Z,14Z,17Z)-eicosapentaenoate + reduced [NADPH--hemoprotein reductase] + O2 = 19-hydroxy-(5Z,8Z,11Z,14Z,17Z)-eicosapentaenoate + oxidized [NADPH--hemoprotein reductase] + H2O + H(+). The catalysed reaction is (4Z,7Z,10Z,13Z,16Z,19Z)-docosahexaenoate + reduced [NADPH--hemoprotein reductase] + O2 = 21-hydroxy-(4Z,7Z,10Z,13Z,16Z,19Z)-docosahexaenoate + oxidized [NADPH--hemoprotein reductase] + H2O + H(+). It carries out the reaction dodecanoate + reduced [NADPH--hemoprotein reductase] + O2 = 11-hydroxydodecanoate + oxidized [NADPH--hemoprotein reductase] + H2O + H(+). The enzyme catalyses tetradecanoate + reduced [NADPH--hemoprotein reductase] + O2 = 13-hydroxytetradecanoate + oxidized [NADPH--hemoprotein reductase] + H2O + H(+). It catalyses the reaction 4-nitrophenol + NADPH + O2 + H(+) = 4-nitrocatechol + NADP(+) + H2O. It participates in lipid metabolism; fatty acid metabolism. The omega-1 hydroxylase activity is stimulated by cytochrome b5. A cytochrome P450 monooxygenase involved in the metabolism of fatty acids. Mechanistically, uses molecular oxygen inserting one oxygen atom into a substrate, and reducing the second into a water molecule, with two electrons provided by NADPH via cytochrome P450 reductase (NADPH--hemoprotein reductase). Catalyzes the hydroxylation of carbon-hydrogen bonds. Hydroxylates fatty acids specifically at the omega-1 position displaying the highest catalytic activity for saturated fatty acids. May be involved in the oxidative metabolism of xenobiotics. This chain is Cytochrome P450 2E1 (CYP2E1), found in Macaca mulatta (Rhesus macaque).